We begin with the raw amino-acid sequence, 154 residues long: Large ribosomal subunit protein uL13 (154 aa).

The protein belongs to the universal ribosomal protein uL13 family. In terms of assembly, part of the 50S ribosomal subunit.

Its function is as follows. This protein is one of the early assembly proteins of the 50S ribosomal subunit, although it is not seen to bind rRNA by itself. It is important during the early stages of 50S assembly. The protein is Large ribosomal subunit protein uL13 of Bartonella tribocorum (strain CIP 105476 / IBS 506).